The chain runs to 950 residues: RNA polymerase-associated protein RapA (950 aa).

The Helicase ATP-binding domain occupies 165 to 333 (EVADRMAPRV…FARLRLLDPN (169 aa)). An ATP-binding site is contributed by 178 to 185 (DEVGLGKT). The short motif at 279-282 (DEAH) is the DEAH box element. A Helicase C-terminal domain is found at 475 to 629 (RVEWLIDTLK…TCPTGNALQH (155 aa)).

The protein belongs to the SNF2/RAD54 helicase family. RapA subfamily. As to quaternary structure, interacts with the RNAP. Has a higher affinity for the core RNAP than for the holoenzyme. Its ATPase activity is stimulated by binding to RNAP.

Transcription regulator that activates transcription by stimulating RNA polymerase (RNAP) recycling in case of stress conditions such as supercoiled DNA or high salt concentrations. Probably acts by releasing the RNAP, when it is trapped or immobilized on tightly supercoiled DNA. Does not activate transcription on linear DNA. Probably not involved in DNA repair. In Pseudomonas aeruginosa (strain LESB58), this protein is RNA polymerase-associated protein RapA.